The following is an 861-amino-acid chain: Methyltransferase/ribosomally synthesized type III borosin cyclic peptide precursor aboMAa (861 aa).

Positions 1-279 are methyltransferase domain; it reads MSSPAVETKV…AISTFYLPPK (279 aa). Active-site residues include Arg100, Tyr104, and Tyr126. S-adenosyl-L-methionine contacts are provided by Tyr126, His128, Val131, Ala158, Gln200, Ala241, Ser272, and Thr273. The segment at 280–408 is clasp domain; it reads ALSPLHEESA…GLVRSVMKTS (129 aa). Residues 409 to 799 form a type III-specific C-terminal domain region; the sequence is PEDVAKQFVQ…PPDLEELPIP (391 aa). 2 disordered regions span residues 575 to 596 and 772 to 801; these read NGAFPSGGGGGSGGGGGSSSQG and EAAEKDSAVDDEKFADEEPPDLEELPIPDA. Positions 579–593 are enriched in gly residues; it reads PSGGGGGSGGGGGSS. Over residues 772-783 the composition is skewed to basic and acidic residues; that stretch reads EAAEKDSAVDDE. The segment covering 784-797 has biased composition (acidic residues); that stretch reads KFADEEPPDLEELP. Residues Val805 and Val807 each carry the N-methylvaline modification. A run of 9 repeats spans residues 805-809, 810-814, 815-819, 820-824, 825-829, 830-834, 835-839, 840-844, and 845-849. The segment at 805-854 is 10 X 5 AA tandem repeats of VDVTD; the sequence is VDVTDVDVTDVDVTDVDVTDVDVTDVDVTDVDVTDVDVTDVDVTDVDVVD. Thr808 bears the N-methylthreonine mark. N-methylvaline is present on residues Val810 and Val812. Thr813 carries the post-translational modification N-methylthreonine. N-methylvaline is present on residues Val815 and Val817. Thr818 is subject to N-methylthreonine. N-methylvaline occurs at positions 820 and 822. Thr823 carries the post-translational modification N-methylthreonine. 2 positions are modified to N-methylvaline: Val825 and Val827. At Thr828 the chain carries N-methylthreonine. Residues Val830 and Val832 each carry the N-methylvaline modification. Thr833 is subject to N-methylthreonine. One copy of the 10; approximate repeat lies at 850–854; that stretch reads VDVVD.

This sequence in the N-terminal section; belongs to the precorrin methyltransferase family. In terms of processing, aboMA automethylates at Val-805, Val-807, Thr-808, Val-810, Val-812, Thr-813, Val-815, Val-817, Thr-818, Val-820, Val-822, Thr-823, Val-825, Val-827 and Thr-828, Val-830, Val-832 and T-833 before being processed by a prolyloligopeptidase which likely forms a peptidyl ester upon removal of the follower propeptide, which then undergoes macrocyclization with the N-terminus of the modified core peptide. Peptide backbone alpha-N-methylations change the physicochemical properties of amide bonds to provide structural constraints and other favorable characteristics including biological membrane permeability to peptides.

Its pathway is secondary metabolite biosynthesis. In terms of biological role, fusion protein of the methyltransferase aboM and a type III borosin core peptide; part of the gene cluster that mediates the biosynthesis of a type III borosin, a highly methylated cyclic peptide with potent biological activities. Type III borosins derive from the C-terminus of the fusion protein, and it is the same protein that methylates its own C-terminus using S-adenosyl methionine (SAM). The C-terminus is subsequently cleaved off and macrocyclized by a prolyloligopeptidase to give the final product. In Anomoporia bombycina (Polyporus bombycinus), this protein is Methyltransferase/ribosomally synthesized type III borosin cyclic peptide precursor aboMAa.